The following is a 331-amino-acid chain: Reticulocalbin-1 (331 aa).

An N-terminal signal peptide occupies residues 1 to 29; the sequence is MARGGRGRRLGLALGLLLALVLAPRVLRA. Asn53 carries an N-linked (GlcNAc...) asparagine glycan. Ser55 carries the post-translational modification Phosphoserine. Thr76 is modified (phosphothreonine). 6 consecutive EF-hand domains span residues 79–114, 115–150, 166–201, 203–238, 244–279, and 280–315; these read ESKE…VQKR, YIFD…YYLG, KMLP…EEFE, MKEI…HEEN, WVLS…QDYD, and HAQA…FVGS. Ser80 bears the Phosphoserine; by FAM20C mark. The Ca(2+) site is built by Asp92, Asp94, Asp96, Glu103, Asp128, Asp130, Asp132, Lys134, Glu139, Asp179, Asn181, Asp183, Thr185, Glu190, Asp216, Asn218, Asp220, Glu227, Asp257, Asn259, Asp261, Lys263, Glu268, Asp293, Asn295, Asp297, Lys299, and Glu304. The Prevents secretion from ER motif lies at 328–331; sequence HDEL.

This sequence belongs to the CREC family. Post-translationally, O-glycosylated. O-mannosylated by POMT1 and POMT2 and elongated by POMGNT1.

It is found in the endoplasmic reticulum lumen. May regulate calcium-dependent activities in the endoplasmic reticulum lumen or post-ER compartment. The protein is Reticulocalbin-1 (RCN1) of Homo sapiens (Human).